Consider the following 306-residue polypeptide: Mycothiol acetyltransferase (306 aa).

N-acetyltransferase domains are found at residues 5-162 (VWAE…TFVP) and 155-306 (VRLR…AQGS). Acetyl-CoA-binding positions include 82-84 (LIV) and 90-95 (RRGHGT). The 1D-myo-inositol 2-(L-cysteinylamino)-2-deoxy-alpha-D-glucopyranoside site is built by Glu182, Lys222, and Glu238. Acetyl-CoA contacts are provided by residues 242 to 244 (VGV) and 249 to 255 (QGGGLGK). Tyr276 is a binding site for 1D-myo-inositol 2-(L-cysteinylamino)-2-deoxy-alpha-D-glucopyranoside.

This sequence belongs to the acetyltransferase family. MshD subfamily. In terms of assembly, monomer.

It catalyses the reaction 1D-myo-inositol 2-(L-cysteinylamino)-2-deoxy-alpha-D-glucopyranoside + acetyl-CoA = mycothiol + CoA + H(+). In terms of biological role, catalyzes the transfer of acetyl from acetyl-CoA to desacetylmycothiol (Cys-GlcN-Ins) to form mycothiol. This Saccharomonospora viridis (strain ATCC 15386 / DSM 43017 / JCM 3036 / CCUG 5913 / NBRC 12207 / NCIMB 9602 / P101) (Thermoactinomyces viridis) protein is Mycothiol acetyltransferase.